The sequence spans 198 residues: Holliday junction branch migration complex subunit RuvA (198 aa).

The tract at residues 1–63 (MYDYIKGQLT…EDAHLLFGFH (63 aa)) is domain I. Residues 64-142 (TEDEKDVFLK…EAPQETGHTK (79 aa)) are domain II. The tract at residues 143 to 147 (ARSNK) is flexible linker. Residues 148–198 (AGNTQLDEAIEALLALGYKAKELKKIRAFFEETSETAEQYIKSALKLLMKG) form a domain III region.

This sequence belongs to the RuvA family. In terms of assembly, homotetramer. Forms an RuvA(8)-RuvB(12)-Holliday junction (HJ) complex. HJ DNA is sandwiched between 2 RuvA tetramers; dsDNA enters through RuvA and exits via RuvB. An RuvB hexamer assembles on each DNA strand where it exits the tetramer. Each RuvB hexamer is contacted by two RuvA subunits (via domain III) on 2 adjacent RuvB subunits; this complex drives branch migration. In the full resolvosome a probable DNA-RuvA(4)-RuvB(12)-RuvC(2) complex forms which resolves the HJ.

The protein localises to the cytoplasm. In terms of biological role, the RuvA-RuvB-RuvC complex processes Holliday junction (HJ) DNA during genetic recombination and DNA repair, while the RuvA-RuvB complex plays an important role in the rescue of blocked DNA replication forks via replication fork reversal (RFR). RuvA specifically binds to HJ cruciform DNA, conferring on it an open structure. The RuvB hexamer acts as an ATP-dependent pump, pulling dsDNA into and through the RuvAB complex. HJ branch migration allows RuvC to scan DNA until it finds its consensus sequence, where it cleaves and resolves the cruciform DNA. This is Holliday junction branch migration complex subunit RuvA from Streptococcus pyogenes serotype M2 (strain MGAS10270).